Consider the following 96-residue polypeptide: Aspartyl/glutamyl-tRNA(Asn/Gln) amidotransferase subunit C (96 aa).

The protein belongs to the GatC family. In terms of assembly, heterotrimer of A, B and C subunits.

It carries out the reaction L-glutamyl-tRNA(Gln) + L-glutamine + ATP + H2O = L-glutaminyl-tRNA(Gln) + L-glutamate + ADP + phosphate + H(+). The enzyme catalyses L-aspartyl-tRNA(Asn) + L-glutamine + ATP + H2O = L-asparaginyl-tRNA(Asn) + L-glutamate + ADP + phosphate + 2 H(+). Its function is as follows. Allows the formation of correctly charged Asn-tRNA(Asn) or Gln-tRNA(Gln) through the transamidation of misacylated Asp-tRNA(Asn) or Glu-tRNA(Gln) in organisms which lack either or both of asparaginyl-tRNA or glutaminyl-tRNA synthetases. The reaction takes place in the presence of glutamine and ATP through an activated phospho-Asp-tRNA(Asn) or phospho-Glu-tRNA(Gln). This Wolinella succinogenes (strain ATCC 29543 / DSM 1740 / CCUG 13145 / JCM 31913 / LMG 7466 / NCTC 11488 / FDC 602W) (Vibrio succinogenes) protein is Aspartyl/glutamyl-tRNA(Asn/Gln) amidotransferase subunit C.